We begin with the raw amino-acid sequence, 122 residues long: Large ribosomal subunit protein uL14 (122 aa).

Belongs to the universal ribosomal protein uL14 family. In terms of assembly, part of the 50S ribosomal subunit. Forms a cluster with proteins L3 and L19. In the 70S ribosome, L14 and L19 interact and together make contacts with the 16S rRNA in bridges B5 and B8.

Its function is as follows. Binds to 23S rRNA. Forms part of two intersubunit bridges in the 70S ribosome. This chain is Large ribosomal subunit protein uL14, found in Shewanella amazonensis (strain ATCC BAA-1098 / SB2B).